Reading from the N-terminus, the 30-residue chain is CQVVERGLDAKAKAAMLDAHNKARQKVANG.

This sequence belongs to the CRISP family. Venom allergen 5-like subfamily. Contains 3 disulfide bonds. As to expression, expressed by the venom gland.

It is found in the secreted. In Scolopendra angulata (Barbados giant red centipede), this protein is Scolopendra 20528.11 Da toxin.